A 201-amino-acid chain; its full sequence is Large ribosomal subunit protein uL18 (201 aa).

This sequence belongs to the universal ribosomal protein uL18 family. As to quaternary structure, part of the 50S ribosomal subunit. Contacts the 5S and 23S rRNAs.

This is one of the proteins that bind and probably mediate the attachment of the 5S RNA into the large ribosomal subunit, where it forms part of the central protuberance. This Thermococcus kodakarensis (strain ATCC BAA-918 / JCM 12380 / KOD1) (Pyrococcus kodakaraensis (strain KOD1)) protein is Large ribosomal subunit protein uL18.